The sequence spans 127 residues: MDVEDTVKKLNLKFRNIEGERLILAITCDENKNVLMVAFMNEEALKKTLETGYMHYYSTSRKKLWRKGEESGNVQKLIKFYRDCDGDALLFIVEQKGVACHEGYYSCFHYKIEDGELKITGEYYSKR.

D83 serves as a coordination point for Mg(2+). C84 is a Zn(2+) binding site. Mg(2+) is bound by residues D85 and D87. 2 residues coordinate Zn(2+): C100 and C107.

The protein belongs to the PRA-CH family. Homodimer. It depends on Mg(2+) as a cofactor. Zn(2+) is required as a cofactor.

The protein localises to the cytoplasm. It carries out the reaction 1-(5-phospho-beta-D-ribosyl)-5'-AMP + H2O = 1-(5-phospho-beta-D-ribosyl)-5-[(5-phospho-beta-D-ribosylamino)methylideneamino]imidazole-4-carboxamide. Its pathway is amino-acid biosynthesis; L-histidine biosynthesis; L-histidine from 5-phospho-alpha-D-ribose 1-diphosphate: step 3/9. Catalyzes the hydrolysis of the adenine ring of phosphoribosyl-AMP. The protein is Phosphoribosyl-AMP cyclohydrolase of Methanocaldococcus jannaschii (strain ATCC 43067 / DSM 2661 / JAL-1 / JCM 10045 / NBRC 100440) (Methanococcus jannaschii).